The primary structure comprises 714 residues: ATP-dependent DNA helicase DinG (714 aa).

The Helicase ATP-binding domain maps to 17–294 (ALQDQIPDFI…TCMEQFRPKT (278 aa)). 54–61 (APTGVGKT) is a binding site for ATP. [4Fe-4S] cluster-binding residues include Cys120, Cys194, Cys199, and Cys205. Residues 248–251 (DEGH) carry the DEAH box motif. The Helicase C-terminal domain maps to 517-698 (HIAEMAAYFR…VFPIEQPAVP (182 aa)).

Belongs to the helicase family. DinG subfamily. Type 1 sub-subfamily. The cofactor is [4Fe-4S] cluster.

It catalyses the reaction Couples ATP hydrolysis with the unwinding of duplex DNA at the replication fork by translocating in the 5'-3' direction. This creates two antiparallel DNA single strands (ssDNA). The leading ssDNA polymer is the template for DNA polymerase III holoenzyme which synthesizes a continuous strand.. The enzyme catalyses ATP + H2O = ADP + phosphate + H(+). Functionally, DNA-dependent ATPase and 5'-3' DNA helicase. Unwinds D-loops, R-loops, forked DNA and G-quadruplex DNA. In Salmonella typhimurium (strain LT2 / SGSC1412 / ATCC 700720), this protein is ATP-dependent DNA helicase DinG.